The sequence spans 570 residues: Dihydroxy-acid dehydratase (570 aa).

A [2Fe-2S] cluster-binding site is contributed by C61. Mg(2+) is bound at residue D94. A [2Fe-2S] cluster-binding site is contributed by C135. The Mg(2+) site is built by D136 and K137. K137 is modified (N6-carboxylysine). Residue C207 participates in [2Fe-2S] cluster binding. Position 459 (E459) interacts with Mg(2+). The active-site Proton acceptor is the S485.

This sequence belongs to the IlvD/Edd family. As to quaternary structure, homodimer. Requires [2Fe-2S] cluster as cofactor. The cofactor is Mg(2+).

The enzyme catalyses (2R)-2,3-dihydroxy-3-methylbutanoate = 3-methyl-2-oxobutanoate + H2O. It catalyses the reaction (2R,3R)-2,3-dihydroxy-3-methylpentanoate = (S)-3-methyl-2-oxopentanoate + H2O. It participates in amino-acid biosynthesis; L-isoleucine biosynthesis; L-isoleucine from 2-oxobutanoate: step 3/4. The protein operates within amino-acid biosynthesis; L-valine biosynthesis; L-valine from pyruvate: step 3/4. Functionally, functions in the biosynthesis of branched-chain amino acids. Catalyzes the dehydration of (2R,3R)-2,3-dihydroxy-3-methylpentanoate (2,3-dihydroxy-3-methylvalerate) into 2-oxo-3-methylpentanoate (2-oxo-3-methylvalerate) and of (2R)-2,3-dihydroxy-3-methylbutanoate (2,3-dihydroxyisovalerate) into 2-oxo-3-methylbutanoate (2-oxoisovalerate), the penultimate precursor to L-isoleucine and L-valine, respectively. This chain is Dihydroxy-acid dehydratase, found in Lactococcus lactis subsp. lactis (strain IL1403) (Streptococcus lactis).